A 229-amino-acid chain; its full sequence is Potassium/proton antiporter CemA (229 aa).

3 consecutive transmembrane segments (helical) span residues 6–26 (AFIP…ISLC), 107–127 (ILHF…SFWG), and 189–209 (ILSG…KYWI).

Belongs to the CemA family.

The protein resides in the plastid. It localises to the chloroplast inner membrane. The enzyme catalyses K(+)(in) + H(+)(out) = K(+)(out) + H(+)(in). Functionally, contributes to K(+)/H(+) antiport activity by supporting proton efflux to control proton extrusion and homeostasis in chloroplasts in a light-dependent manner to modulate photosynthesis. Prevents excessive induction of non-photochemical quenching (NPQ) under continuous-light conditions. Indirectly promotes efficient inorganic carbon uptake into chloroplasts. In Olimarabidopsis pumila (Dwarf rocket), this protein is Potassium/proton antiporter CemA.